The chain runs to 360 residues: Phospho-N-acetylmuramoyl-pentapeptide-transferase (360 aa).

The next 10 membrane-spanning stretches (helical) occupy residues 26 to 46 (AIVSLLTALFISLWMGPRMIA), 72 to 92 (PTMGGIMILTAITVSVLLWAY), 94 to 114 (SNPYVWCVLTVLIGYGIIGFV), 132 to 152 (WKYFWMSVIALGVAFALYLAG), 168 to 188 (VMPQLGLFYILLAYFVIVGTG), 199 to 219 (GLAIMPTVFVAAGFALVAWAT), 236 to 256 (AGELVIVCTAIVGAGLGFLWF), 263 to 283 (VFMGDVGSLALGGALGIIAVL), 288 to 308 (FLLVIMGGVFVVETLSVILQV), and 338 to 358 (VIVRFWIISLMLVLIGLATLK).

This sequence belongs to the glycosyltransferase 4 family. MraY subfamily. It depends on Mg(2+) as a cofactor.

It localises to the cell inner membrane. The enzyme catalyses UDP-N-acetyl-alpha-D-muramoyl-L-alanyl-gamma-D-glutamyl-meso-2,6-diaminopimeloyl-D-alanyl-D-alanine + di-trans,octa-cis-undecaprenyl phosphate = di-trans,octa-cis-undecaprenyl diphospho-N-acetyl-alpha-D-muramoyl-L-alanyl-D-glutamyl-meso-2,6-diaminopimeloyl-D-alanyl-D-alanine + UMP. It functions in the pathway cell wall biogenesis; peptidoglycan biosynthesis. Functionally, catalyzes the initial step of the lipid cycle reactions in the biosynthesis of the cell wall peptidoglycan: transfers peptidoglycan precursor phospho-MurNAc-pentapeptide from UDP-MurNAc-pentapeptide onto the lipid carrier undecaprenyl phosphate, yielding undecaprenyl-pyrophosphoryl-MurNAc-pentapeptide, known as lipid I. The chain is Phospho-N-acetylmuramoyl-pentapeptide-transferase from Klebsiella pneumoniae subsp. pneumoniae (strain ATCC 700721 / MGH 78578).